The chain runs to 912 residues: Protein translocase subunit SecA (912 aa).

ATP is bound by residues glutamine 87, 105 to 109, and aspartate 499; that span reads GEGKT. Cysteine 897, cysteine 899, cysteine 908, and histidine 909 together coordinate Zn(2+).

This sequence belongs to the SecA family. As to quaternary structure, monomer and homodimer. Part of the essential Sec protein translocation apparatus which comprises SecA, SecYEG and auxiliary proteins SecDF-YajC and YidC. Zn(2+) is required as a cofactor.

Its subcellular location is the cell inner membrane. It localises to the cytoplasm. The enzyme catalyses ATP + H2O + cellular proteinSide 1 = ADP + phosphate + cellular proteinSide 2.. Part of the Sec protein translocase complex. Interacts with the SecYEG preprotein conducting channel. Has a central role in coupling the hydrolysis of ATP to the transfer of proteins into and across the cell membrane, serving both as a receptor for the preprotein-SecB complex and as an ATP-driven molecular motor driving the stepwise translocation of polypeptide chains across the membrane. The chain is Protein translocase subunit SecA from Rhizorhabdus wittichii (strain DSM 6014 / CCUG 31198 / JCM 15750 / NBRC 105917 / EY 4224 / RW1) (Sphingomonas wittichii).